The chain runs to 238 residues: Ribonuclease PH (238 aa).

Residues R86 and 124-126 each bind phosphate; that span reads GTR.

Belongs to the RNase PH family. In terms of assembly, homohexameric ring arranged as a trimer of dimers.

The enzyme catalyses tRNA(n+1) + phosphate = tRNA(n) + a ribonucleoside 5'-diphosphate. In terms of biological role, phosphorolytic 3'-5' exoribonuclease that plays an important role in tRNA 3'-end maturation. Removes nucleotide residues following the 3'-CCA terminus of tRNAs; can also add nucleotides to the ends of RNA molecules by using nucleoside diphosphates as substrates, but this may not be physiologically important. Probably plays a role in initiation of 16S rRNA degradation (leading to ribosome degradation) during starvation. This is Ribonuclease PH from Hahella chejuensis (strain KCTC 2396).